Here is a 116-residue protein sequence, read N- to C-terminus: Cocaine- and amphetamine-regulated transcript protein (116 aa).

A signal peptide spans 1–27 (MESPRLRLLPLLGAALLLLLPLLGALA). Y41 carries the phosphotyrosine modification. S48 carries the post-translational modification Phosphoserine. Intrachain disulfides connect C82–C100, C88–C108, and C102–C115.

It belongs to the CART family.

Its subcellular location is the secreted. Functionally, satiety factor closely associated with the actions of leptin and neuropeptide y; this anorectic peptide inhibits both normal and starvation-induced feeding and completely blocks the feeding response induced by neuropeptide Y and regulated by leptin in the hypothalamus. The polypeptide is Cocaine- and amphetamine-regulated transcript protein (CARTPT) (Bos taurus (Bovine)).